Here is a 1220-residue protein sequence, read N- to C-terminus: Formin-F (1220 aa).

Positions 1 to 10 (MNRIFGRKKK) are enriched in basic residues. The tract at residues 1-62 (MNRIFGRKKK…TNSKSADKFD (62 aa)) is disordered. A GBD/FH3 domain is found at 6-373 (GRKKKDKDSD…QISVNKPMIG (368 aa)). A compositionally biased stretch (basic and acidic residues) spans 11–20 (DKDSDEKGST). Polar residues predominate over residues 41 to 56 (AYSSLQPDGNNSTNSK). Residues 392 to 428 (VALQSEFQKNIEELAKVKDQLKKANFDLNIANQELSS) adopt a coiled-coil conformation. Disordered stretches follow at residues 461-659 (IDSN…KFTV), 711-732 (SQKK…GTVS), and 1049-1192 (DEAK…KKDI). Composition is skewed to low complexity over residues 501 to 518 (SKPP…SSSQ) and 525 to 554 (SNLS…PQQQ). One can recognise an FH1 domain in the interval 532–655 (SDSLSNDFKS…NSNKPPANAP (124 aa)). Polar residues predominate over residues 555 to 564 (NIESTLTPEP). Residues 575–638 (TTPPPAPPAP…GKGGPPPPPG (64 aa)) show a composition bias toward pro residues. Residues 656 to 1054 (KFTVSKPTTK…AIKRDEAKAK (399 aa)) enclose the FH2 domain. Basic and acidic residues predominate over residues 711–722 (SQKKLEASDKKS). Residues 1032 to 1062 (YKDFQRDKEAAERAIKRDEAKAKKAQQLKRM) are a coiled coil. A compositionally biased stretch (polar residues) spans 1066–1083 (IASSTNNKNPLASSSTSV). Residues 1083–1158 (VGDGGMVEDI…TPSKSGSRRE (76 aa)) form the DAD domain. Residues 1117 to 1142 (DSSSITTISEQSENSNTSSITITTPS) show a composition bias toward low complexity. Residues 1161 to 1192 (TSKSSDKDKEKEKEKEKQCESTESEDINKKDI) are compositionally biased toward basic and acidic residues.

The protein belongs to the formin homology family. Diaphanous subfamily. As to quaternary structure, interacts (via GBD/FH3 domain) with activated Rho-GTPases.

Functionally, formins play an important role in the nucleation of actin and the formation of linear actin filaments. This is Formin-F (forF) from Dictyostelium discoideum (Social amoeba).